A 395-amino-acid chain; its full sequence is Probable beta-1,3-galactosyltransferase 8 (395 aa).

Residues 5 to 27 traverse the membrane as a helical; Signal-anchor for type II membrane protein segment; the sequence is AASGKAIIVLCLASFLAGSLFMS. Asn117 is a glycosylation site (N-linked (GlcNAc...) asparagine).

This sequence belongs to the glycosyltransferase 31 family. It depends on Mn(2+) as a cofactor.

Its subcellular location is the golgi apparatus membrane. It functions in the pathway protein modification; protein glycosylation. In terms of biological role, beta-1,3-galactosyltransferase that transfers galactose from UDP-galactose to substrates with a terminal glycosyl residue. This chain is Probable beta-1,3-galactosyltransferase 8 (B3GALT8), found in Arabidopsis thaliana (Mouse-ear cress).